Consider the following 100-residue polypeptide: Phosphoribosylformylglycinamidine synthase subunit PurS (100 aa).

The protein belongs to the PurS family. As to quaternary structure, homodimer. Part of the FGAM synthase complex composed of 1 PurL, 1 PurQ and 2 PurS subunits.

The protein resides in the cytoplasm. It catalyses the reaction N(2)-formyl-N(1)-(5-phospho-beta-D-ribosyl)glycinamide + L-glutamine + ATP + H2O = 2-formamido-N(1)-(5-O-phospho-beta-D-ribosyl)acetamidine + L-glutamate + ADP + phosphate + H(+). It participates in purine metabolism; IMP biosynthesis via de novo pathway; 5-amino-1-(5-phospho-D-ribosyl)imidazole from N(2)-formyl-N(1)-(5-phospho-D-ribosyl)glycinamide: step 1/2. In terms of biological role, part of the phosphoribosylformylglycinamidine synthase complex involved in the purines biosynthetic pathway. Catalyzes the ATP-dependent conversion of formylglycinamide ribonucleotide (FGAR) and glutamine to yield formylglycinamidine ribonucleotide (FGAM) and glutamate. The FGAM synthase complex is composed of three subunits. PurQ produces an ammonia molecule by converting glutamine to glutamate. PurL transfers the ammonia molecule to FGAR to form FGAM in an ATP-dependent manner. PurS interacts with PurQ and PurL and is thought to assist in the transfer of the ammonia molecule from PurQ to PurL. This Synechocystis sp. (strain ATCC 27184 / PCC 6803 / Kazusa) protein is Phosphoribosylformylglycinamidine synthase subunit PurS.